A 588-amino-acid chain; its full sequence is Serine/threonine-protein phosphatase 2A 65 kDa regulatory subunit A alpha isoform (588 aa).

HEAT repeat units lie at residues 2–42 (AMVD…ALGE), 44–80 (RTRKELIPFLSENSDDDDEVLLAMAEELGVFIPFVGG), 81–119 (IEFAHVLLPPLESLCTVEETCVREKAVESLCKIGSQMKE), 158–196 (DVLKTELRATYSQLCKDDMPMVRRAAASNLGKFATTVES), 197–235 (TFLIAEIMTMFDDLTKDDQDSVRLLAVEGCAALGKLLEP), 236–274 (QDCVARILPVIVNFSQDKSWRVRYMVANQLYELCEAVGP), 275–313 (DCTRTDLVPAYVRLLRDNEAEVRIAAAGKVTKFCRLLNP), 315–352 (LAIQHILPCVKELSSDSSQHVRSALASVIMGMAPILGK), 353–391 (DSTIEHLLPIFLSLLKDEFPDVRLNIISKLDQVNQVIGI), 393–430 (LLSQSLLPAIVELAEDRHWRVRLAIIEYVPLLASQLGI), 432–469 (FFDDKLGALCMQWLQDKVYSIREAAANNLKRLAEEFGP), 470–508 (EWAMQHLVPQVLDMVNNPHYLHRMMVLRAISLMAPVMGS), 509–547 (EITCSKFLPVVVEASKDRVPNIKFNVAKLLQSLIPIVDQ), and 549–586 (VVDKTIRQCLVDLSEDPDVDVRYFANQALNSIDGSTAA).

This sequence belongs to the phosphatase 2A regulatory subunit A family. In terms of assembly, PP2A consists of a common heterodimeric core enzyme, composed of a 36 kDa catalytic subunit (subunit C) and a 65 kDa constant regulatory subunit (subunit A), that associates with a variety of regulatory subunits such as subunits B (the R2/B/PR55/B55, R3/B''/PR72/PR130/PR59 and R5/B'/B56 families) and the regulatory subunits TON2. Interacts with CYP20-1/ROC7. Also interacts with phosphatidic acid (PA), a lipid signaling molecule. Interacts with CHIP. Interacts with SIC/RON3. Ubiquitinated. CHIP-mediated ubiquitination enhances phosphatase activity after an abiotic stress such as low temperature or darkness. As to expression, mostly expressed in cell-dividing tissues such as apical meristems. Ubiquitous, with higher levels in roots and flowers (at protein level).

Its subcellular location is the cytoplasm. The protein resides in the cytosol. The protein localises to the nucleus. In terms of biological role, the A subunit of protein phosphatase 2A serves as a scaffolding molecule to coordinate the assembly of the catalytic subunit and a variable regulatory B subunit. Seems to act as a positive regulator of PP2A catalytic activity. Confers resistance to phosphatase inhibitors such as okadaic acid and cantharidin. Involved during developmental process such as seedling and floral developments, root gravitropism, and stomatal opening regulation. Involved in the regulation of auxin efflux, especially during basipetal (tips to base) auxin transport in roots, and appears to contribute to the perception of auxin efflux inhibitors such as 1-N-naphthylphthalamic acid (NPA) and to semicarbazone I (substituted phenylsemicarbazone of 2-acetylarylcarboxylic acids) (SCB-I). Modulates the magnitude of ethylene response in the hypocotyl and stem, and functions as a general positive transducer of early ABA signaling. The holoenzyme composed of PP2AA1, PP2A4 and B'ZETA or B'ETA acts as a negative regulator of plant innate immunity by controlling BAK1 phosphorylation state and activation in surface-localized immune receptor complexes. This chain is Serine/threonine-protein phosphatase 2A 65 kDa regulatory subunit A alpha isoform (PP2AA1), found in Arabidopsis thaliana (Mouse-ear cress).